The chain runs to 339 residues: Type IV secretion system protein PtlH homolog (339 aa).

Belongs to the GSP E family.

This is Type IV secretion system protein PtlH homolog (ptlH) from Bordetella parapertussis (strain 12822 / ATCC BAA-587 / NCTC 13253).